The chain runs to 36 residues: MTTFHFPSIFVPLVGLVFPAIAIASLFLHVQKNKIV.

Residues 8 to 28 (SIFVPLVGLVFPAIAIASLFL) form a helical membrane-spanning segment.

This sequence belongs to the PsaI family.

The protein resides in the plastid. Its subcellular location is the chloroplast thylakoid membrane. Its function is as follows. May help in the organization of the PsaL subunit. This is Photosystem I reaction center subunit VIII from Jasminum nudiflorum (Winter jasmine).